A 144-amino-acid polypeptide reads, in one-letter code: Large ribosomal subunit protein uL15 (144 aa).

Positions 1 to 49 are disordered; that stretch reads MRLNTLSPAAGSKSAPKRVGRGIGSGLGKTAGRGHKGQKSRSGGGVRVG. Over residues 21–31 the composition is skewed to gly residues; that stretch reads RGIGSGLGKTA.

It belongs to the universal ribosomal protein uL15 family. In terms of assembly, part of the 50S ribosomal subunit.

Functionally, binds to the 23S rRNA. The sequence is that of Large ribosomal subunit protein uL15 from Shewanella denitrificans (strain OS217 / ATCC BAA-1090 / DSM 15013).